The chain runs to 839 residues: Oligopeptide transporter phomP2 (839 aa).

The disordered stretch occupies residues 1–58; it reads MEADPKVPFTDEMNIQDEHNWESGSWSSSRRSNDSNVTLLSRRSSVEQHEDERQKDSD. Residues 23-36 show a composition bias toward low complexity; the sequence is SGSWSSSRRSNDSN. N-linked (GlcNAc...) asparagine glycosylation is found at asparagine 33 and asparagine 36. Residues 44-58 are compositionally biased toward basic and acidic residues; the sequence is SSVEQHEDERQKDSD. A run of 6 helical transmembrane segments spans residues 105–125, 177–197, 210–230, 268–288, 315–335, and 345–365; these read VWLL…VYYF, ALVV…GPLS, PWAI…VGLY, VFMA…FVFP, GFGL…SPLF, and FVGA…SDAL. N-linked (GlcNAc...) asparagine glycans are attached at residues asparagine 386 and asparagine 398. Transmembrane regions (helical) follow at residues 415–435, 478–498, 505–525, and 585–605; these read AMHF…AVLF, AWYA…LYAG, WGLQ…GMLF, and WELL…NWAV. Residues 629 to 646 are compositionally biased toward gly residues; it reads QGLGLGQGGGGGGGGGGQ. The segment at 629–654 is disordered; that stretch reads QGLGLGQGGGGGGGGGGQQQRAAGAH. The next 3 helical transmembrane spans lie at 665 to 685, 697 to 717, and 728 to 748; these read NFFS…FGGG, WLLP…WLIH, and WPLH…FPTT. The N-linked (GlcNAc...) asparagine glycan is linked to asparagine 749. A helical transmembrane segment spans residues 781-801; that stretch reads AGLDCGAQLVQMVLGVAFLVF.

This sequence belongs to the oligopeptide OPT transporter family.

The protein localises to the membrane. In terms of biological role, oligopeptide transporter; part of the gene cluster that mediates the biosynthesis of the phomopsins, a group of hexapeptide mycotoxins which infects lupins and causes lupinosis disease in livestock. The sequence is that of Oligopeptide transporter phomP2 from Diaporthe leptostromiformis (Lupinosis disease fungus).